The chain runs to 215 residues: Protein FAM167A (215 aa).

Disordered stretches follow at residues 1–26 (MSVP…PPDD) and 63–109 (RPAA…LTTG). The stretch at 124-157 (LRKELAEMRLQDQQLARQLMRLRGDINKLKIEQT) forms a coiled coil.

It belongs to the FAM167 (SEC) family.

The protein is Protein FAM167A (Fam167a) of Mus musculus (Mouse).